Consider the following 281-residue polypeptide: Undecaprenyl-diphosphatase (281 aa).

7 helical membrane passes run 49-69 (SANTFKIVIQLGSIFAAAWIF), 92-112 (LHIFIGLIPAGIMGLLFDDFI), 116-136 (LFSVPTVLIGLALGALLMIAA), 152-172 (MTYKQALIIGVAQCLALWPGF), 196-216 (TFIMAVPIMFAASAKSLASNI), 224-244 (ILFYIVGFIAAFIFGVLSIRL), and 257-277 (FAIYRLILVAVIAVLYFGFGI).

It belongs to the UppP family.

The protein localises to the cell membrane. The enzyme catalyses di-trans,octa-cis-undecaprenyl diphosphate + H2O = di-trans,octa-cis-undecaprenyl phosphate + phosphate + H(+). Functionally, catalyzes the dephosphorylation of undecaprenyl diphosphate (UPP). Confers resistance to bacitracin. The sequence is that of Undecaprenyl-diphosphatase from Macrococcus caseolyticus (strain JCSC5402) (Macrococcoides caseolyticum).